Here is a 160-residue protein sequence, read N- to C-terminus: Anaerobic nitrite reductase MHB1 (160 aa).

The Globin domain maps to 8–157 (GFTEEQEALV…LVNAIKSEMK (150 aa)). The short motif at 41 to 45 (EIAPS) is the Homodimerization element. Heme b is bound by residues Ser-51, Lys-65, His-69, Lys-99, and His-104. Positions 111–123 (DEHFEVTKFALLE) match the Homodimerization motif.

Belongs to the plant globin family. In terms of assembly, homodimer. Requires heme b as cofactor. Root specific.

Its subcellular location is the nucleus matrix. It is found in the cytoplasm. The enzyme catalyses Fe(III)-heme b-[protein] + nitric oxide + H2O = Fe(II)-heme b-[protein] + nitrite + 2 H(+). Functionally, phytoglobin that reduces nitrite to nitric oxide (NO) under anoxic conditions (e.g. during flooding or in waterlogged soil) and upon root nodulation. Required for general plant development and during nodulation, especially for the onset of symbiosis. Monitors nitric oxide (NO) levels during early phase of the nitrogen-fixing symbiosis and buffers oxygen in functioning nodules. May not function as an oxygen storage or transport protein. Has an unusually high affinity for O(2) through a hexacoordinate heme iron because of a very low dissociation constant. This chain is Anaerobic nitrite reductase MHB1, found in Medicago sativa (Alfalfa).